Here is a 1075-residue protein sequence, read N- to C-terminus: Carbamoyl phosphate synthase large chain (1075 aa).

The tract at residues 1 to 403 is carboxyphosphate synthetic domain; the sequence is MPKRTDINTI…SLQKALRGLE (403 aa). 12 residues coordinate ATP: Arg-129, Arg-169, Gly-175, Gly-176, Gln-208, Val-210, Glu-215, Gly-241, Val-242, His-243, Gln-285, and Glu-299. Residues 133-328 enclose the ATP-grasp 1 domain; sequence KDAMTKIGLN…IAKVAAKLAV (196 aa). Gln-285, Glu-299, and Asn-301 together coordinate Mg(2+). Mn(2+)-binding residues include Gln-285, Glu-299, and Asn-301. The oligomerization domain stretch occupies residues 404-548; it reads IGICGFNLRS…YSTYEDECEA (145 aa). Residues 549 to 930 are carbamoyl phosphate synthetic domain; sequence KPTTRQKVMI…AYYKAQLGAG (382 aa). In terms of domain architecture, ATP-grasp 2 spans 673–864; sequence QKILTDLGLK…LAKIAALVMA (192 aa). ATP is bound by residues Arg-709, His-748, Leu-750, Glu-755, Gly-780, Ile-781, His-782, Ser-783, Gln-823, and Glu-835. The Mg(2+) site is built by Gln-823, Glu-835, and Asn-837. Residues Gln-823, Glu-835, and Asn-837 each coordinate Mn(2+). Residues 931–1070 form the MGS-like domain; sequence ERIPSTGKVF…QQLHLSSALA (140 aa). Residues 931 to 1075 form an allosteric domain region; the sequence is ERIPSTGKVF…SSALANQITR (145 aa).

Belongs to the CarB family. As to quaternary structure, composed of two chains; the small (or glutamine) chain promotes the hydrolysis of glutamine to ammonia, which is used by the large (or ammonia) chain to synthesize carbamoyl phosphate. Tetramer of heterodimers (alpha,beta)4. Requires Mg(2+) as cofactor. Mn(2+) serves as cofactor.

The enzyme catalyses hydrogencarbonate + L-glutamine + 2 ATP + H2O = carbamoyl phosphate + L-glutamate + 2 ADP + phosphate + 2 H(+). It catalyses the reaction hydrogencarbonate + NH4(+) + 2 ATP = carbamoyl phosphate + 2 ADP + phosphate + 2 H(+). It participates in amino-acid biosynthesis; L-arginine biosynthesis; carbamoyl phosphate from bicarbonate: step 1/1. Its pathway is pyrimidine metabolism; UMP biosynthesis via de novo pathway; (S)-dihydroorotate from bicarbonate: step 1/3. In terms of biological role, large subunit of the glutamine-dependent carbamoyl phosphate synthetase (CPSase). CPSase catalyzes the formation of carbamoyl phosphate from the ammonia moiety of glutamine, carbonate, and phosphate donated by ATP, constituting the first step of 2 biosynthetic pathways, one leading to arginine and/or urea and the other to pyrimidine nucleotides. The large subunit (synthetase) binds the substrates ammonia (free or transferred from glutamine from the small subunit), hydrogencarbonate and ATP and carries out an ATP-coupled ligase reaction, activating hydrogencarbonate by forming carboxy phosphate which reacts with ammonia to form carbamoyl phosphate. The protein is Carbamoyl phosphate synthase large chain of Haemophilus ducreyi (strain 35000HP / ATCC 700724).